An 84-amino-acid polypeptide reads, in one-letter code: Small ribosomal subunit protein bS20 (84 aa).

The interval 1-28 is disordered; that stretch reads MPNIKSAIKRVKTAETRNSRNASQRSAM.

This sequence belongs to the bacterial ribosomal protein bS20 family.

Binds directly to 16S ribosomal RNA. The chain is Small ribosomal subunit protein bS20 from Listeria monocytogenes serotype 4b (strain CLIP80459).